The sequence spans 648 residues: DNA gyrase subunit B (648 aa).

Residues 427-541 enclose the Toprim domain; the sequence is TELFIVEGDS…AGYVYIAQPP (115 aa). Positions 433, 506, and 508 each coordinate Mg(2+).

It belongs to the type II topoisomerase GyrB family. Heterotetramer, composed of two GyrA and two GyrB chains. In the heterotetramer, GyrA contains the active site tyrosine that forms a transient covalent intermediate with DNA, while GyrB binds cofactors and catalyzes ATP hydrolysis. It depends on Mg(2+) as a cofactor. Requires Mn(2+) as cofactor. The cofactor is Ca(2+).

The protein resides in the cytoplasm. It catalyses the reaction ATP-dependent breakage, passage and rejoining of double-stranded DNA.. Functionally, a type II topoisomerase that negatively supercoils closed circular double-stranded (ds) DNA in an ATP-dependent manner to modulate DNA topology and maintain chromosomes in an underwound state. Negative supercoiling favors strand separation, and DNA replication, transcription, recombination and repair, all of which involve strand separation. Also able to catalyze the interconversion of other topological isomers of dsDNA rings, including catenanes and knotted rings. Type II topoisomerases break and join 2 DNA strands simultaneously in an ATP-dependent manner. The chain is DNA gyrase subunit B from Streptococcus pneumoniae serotype 4 (strain ATCC BAA-334 / TIGR4).